A 141-amino-acid polypeptide reads, in one-letter code: Cystatin (141 aa).

An N-terminal signal peptide occupies residues 1 to 26 (MVHSQLPVAGPLRLLCALLLLPSATM). In terms of domain architecture, Cystatin spans 29–129 (GGLSPRSVTD…CHFQVWSRPW (101 aa)). A Secondary area of contact motif is present at residues 73–77 (QVVSG). Disulfide bonds link cysteine 91–cysteine 107 and cysteine 120–cysteine 140.

Belongs to the cystatin family. In terms of tissue distribution, expressed at a low level by the venom gland (at protein level).

Its subcellular location is the secreted. Its function is as follows. Inhibits various C1 cysteine proteases including cathepsin L, papain and cathepsin B. This protein has no toxic activity and its function in the venom is unknown. It may play a role as a housekeeping or regulatory protein. The chain is Cystatin from Pseudechis australis (Mulga snake).